We begin with the raw amino-acid sequence, 405 residues long: Argininosuccinate synthase (405 aa).

ATP is bound at residue 8 to 16 (AYSGGLDTS). 2 residues coordinate L-citrulline: Tyr86 and Ser91. Gly116 is a binding site for ATP. Residues Thr118, Asn122, and Asp123 each contribute to the L-aspartate site. Asn122 is an L-citrulline binding site. Arg126, Ser175, Ser184, Glu260, and Tyr272 together coordinate L-citrulline.

The protein belongs to the argininosuccinate synthase family. Type 1 subfamily. In terms of assembly, homotetramer.

It is found in the cytoplasm. It carries out the reaction L-citrulline + L-aspartate + ATP = 2-(N(omega)-L-arginino)succinate + AMP + diphosphate + H(+). It participates in amino-acid biosynthesis; L-arginine biosynthesis; L-arginine from L-ornithine and carbamoyl phosphate: step 2/3. In Koribacter versatilis (strain Ellin345), this protein is Argininosuccinate synthase.